The primary structure comprises 146 residues: Putative phosphotransferase enzyme IIA component YadI (146 aa).

In terms of domain architecture, PTS EIIA type-4 spans 1-124; sequence MLGWVITCHD…RIVELGAPEV (124 aa). His9 acts as the Tele-phosphohistidine intermediate in catalysis.

The protein localises to the cytoplasm. In terms of biological role, the phosphoenolpyruvate-dependent sugar phosphotransferase system (sugar PTS), a major carbohydrate active -transport system, catalyzes the phosphorylation of incoming sugar substrates concomitantly with their translocation across the cell membrane. This Escherichia coli (strain K12) protein is Putative phosphotransferase enzyme IIA component YadI (yadI).